The following is a 752-amino-acid chain: MDDDHKVSNDISLLPDLNFDSSSPFTSIEFDSSICDLLNLETGGDTPNLIPDHNPFFDSFDGLQEEEEDSHFVVEPESPKVYIAPRVMINHQDSFSLDSRNDEYIEDVKILPGSPGGIQDLGLSRLKVPGSPRAFVHPRSSGSPRFVSPTSPVLIDTAAPFESVKEAVSKFGGITDWKAHKIQTIERRKTVDQELEKIQEDMPDYKKQAVVAEEAKHQVVMELERTRNVVEELKLELEKAEKEEQQAKQDSDLAKLRVEEMEQGIAGEVSVAAKSQLEVAKARHLSAVSELGTIREEIEMVSNEYESLLTEKDLAAKKAEDSVLKAKDVEKQMEGLTMEVIATKQLLELAHATHLEAQEKKLDAAMARDQDVYNQEKELKMVEDEIKRFRQDIDAADDVKTKLKTASALQQDLRAEIAAYKDSNMGKRNNSDIQAAVDSARKELEEVISNIEKANSEVKTLKIIVGSLQSELAREKHDLSETRQRNREDTREEKCTEIAKKLQEASREAEEAKSLAIAAREELRKAKEESDEAKTGLSAVERQLMESKKEMEASRASEKLALAAIKALQETEYANKIEDISSSPKSIIISVEEYYELSKQAHEVEEAANRKLAEIVSKIEVAKEEESRILENLEEVSRETAIRKVELKEAMTKVEKARDGKVGMDHELRKWRSDNGNRSPEGGNKENLSKSKSALHQPTTFTFGEQASSSNVTPQASSSNVTPETETKKKKKRFSLLPKVFMFLSRKKSSNK.

Ser-143 carries the post-translational modification Phosphoserine. Coiled coils occupy residues Glu-186–Ser-557 and Glu-596–Met-651. Residues Lys-476 to Cys-495 are disordered. Basic and acidic residues predominate over residues Lys-653–Asn-675. Residues Lys-653–Arg-733 are disordered. A compositionally biased stretch (polar residues) spans Lys-690–Pro-723.

The protein belongs to the WEB family.

The chain is Protein WEAK CHLOROPLAST MOVEMENT UNDER BLUE LIGHT-like 2 (WEL2) from Arabidopsis thaliana (Mouse-ear cress).